Reading from the N-terminus, the 191-residue chain is GDP-mannose pyrophosphatase (191 aa).

GDP-alpha-D-mannose contacts are provided by residues Tyr-17, 38-40, Arg-67, and 85-87; these read KRE and AGL. The region spanning 43-180 is the Nudix hydrolase domain; that stretch reads DRGNGATILL…EIRDGKTVLL (138 aa). Mg(2+) contacts are provided by Ala-85, Glu-100, and Glu-104. The Nudix box motif lies at 86–106; it reads GLLDNDEPEVCIRKEAIEETG. GDP-alpha-D-mannose is bound by residues Glu-104, Glu-127, 150-151, and Lys-176; that span reads DE. Glu-151 lines the Mg(2+) pocket.

Belongs to the Nudix hydrolase family. NudK subfamily. Homodimer. Requires Mg(2+) as cofactor.

It carries out the reaction GDP-alpha-D-mannose + H2O = alpha-D-mannose 1-phosphate + GMP + 2 H(+). Nucleoside diphosphate sugar hydrolase that hydrolyzes GDP-mannose as its preferred substrate, yielding GMP and mannose-1-phosphate. The chain is GDP-mannose pyrophosphatase (nudK) from Escherichia coli (strain UTI89 / UPEC).